Here is a 133-residue protein sequence, read N- to C-terminus: Protein Wnt-4 (133 aa).

The O-palmitoleoyl serine; by PORCN moiety is linked to residue S1. Cystine bridges form between C69–C114 and C99–C109. N100 carries an N-linked (GlcNAc...) asparagine glycan.

It belongs to the Wnt family. Palmitoleoylation is required for efficient binding to frizzled receptors. Depalmitoleoylation leads to Wnt signaling pathway inhibition.

It is found in the secreted. The protein resides in the extracellular space. It localises to the extracellular matrix. Its function is as follows. Ligand for members of the frizzled family of seven transmembrane receptors. Plays an important role in embryonic development. The protein is Protein Wnt-4 (WNT-4) of Strongylocentrotus purpuratus (Purple sea urchin).